A 486-amino-acid chain; its full sequence is Cobyric acid synthase (486 aa).

The GATase cobBQ-type domain maps to 251-439 (RAKIVVPMLS…VHGLFERGEA (189 aa)). The Nucleophile role is filled by Cys333. The active site involves His431.

Belongs to the CobB/CobQ family. CobQ subfamily.

The protein operates within cofactor biosynthesis; adenosylcobalamin biosynthesis. Functionally, catalyzes amidations at positions B, D, E, and G on adenosylcobyrinic A,C-diamide. NH(2) groups are provided by glutamine, and one molecule of ATP is hydrogenolyzed for each amidation. This Caulobacter sp. (strain K31) protein is Cobyric acid synthase.